Here is a 95-residue protein sequence, read N- to C-terminus: Large ribosomal subunit protein uL23c (95 aa).

This sequence belongs to the universal ribosomal protein uL23 family. In terms of assembly, part of the 50S ribosomal subunit.

Its subcellular location is the plastid. The protein resides in the chloroplast. Binds to 23S rRNA. The chain is Large ribosomal subunit protein uL23c (rpl23) from Chlamydomonas reinhardtii (Chlamydomonas smithii).